Here is a 551-residue protein sequence, read N- to C-terminus: Interleukin-2 receptor subunit beta (551 aa).

The first 26 residues, 1 to 26 (MAAPALSWRLPLLILLLPLATSWASA), serve as a signal peptide directing secretion. Over 27-240 (AVNGTSQFTC…TKPAALGKDT (214 aa)) the chain is Extracellular. N-linked (GlcNAc...) asparagine glycosylation is found at N29, N43, and N71. Intrachain disulfides connect C36–C46, C59–C110, and C74–C86. A Fibronectin type-III domain is found at 134 to 234 (APISLQVVHV…QPLAFRTKPA (101 aa)). A glycan (N-linked (GlcNAc...) asparagine) is linked at N149. The WSXWS motif signature appears at 220-224 (WSPWS). Residues 241 to 265 (IPWLGHLLVGLSGAFGFIILVYLLI) form a helical membrane-spanning segment. The Cytoplasmic portion of the chain corresponds to 266–551 (NCRNTGPWLK…LQGQDPTHLV (286 aa)). Positions 278–286 (LKCNTPDPS) match the Box 1 motif motif. Disordered regions lie at residues 389 to 416 (EEDPDEGVAGAPTGSSPQPLQPLSGEDD) and 432 to 486 (PSLL…VDFQ).

Belongs to the type I cytokine receptor family. Type 4 subfamily. Non-covalent dimer of an alpha and a beta subunit. IL2R exists in 3 different forms: a high affinity dimer, an intermediate affinity monomer (beta subunit), and a low affinity monomer (alpha subunit). The high and intermediate affinity forms also associate with a gamma subunit. Interacts with SHB upon interleukin stimulation. As to quaternary structure, (Microbial infection) Interacts with HTLV-1 accessory protein p12I.

Its subcellular location is the cell membrane. Its function is as follows. Receptor for interleukin-2. This beta subunit is involved in receptor mediated endocytosis and transduces the mitogenic signals of IL2. Probably in association with IL15RA, involved in the stimulation of neutrophil phagocytosis by IL15. The chain is Interleukin-2 receptor subunit beta from Homo sapiens (Human).